Reading from the N-terminus, the 342-residue chain is uncharacterized protein (342 aa).

It belongs to the cycloisomerase 2 family.

This is an uncharacterized protein from Staphylococcus epidermidis (strain ATCC 12228 / FDA PCI 1200).